The following is a 155-amino-acid chain: Large ribosomal subunit protein uL13 (155 aa).

It belongs to the universal ribosomal protein uL13 family. In terms of assembly, part of the 50S ribosomal subunit.

This protein is one of the early assembly proteins of the 50S ribosomal subunit, although it is not seen to bind rRNA by itself. It is important during the early stages of 50S assembly. The protein is Large ribosomal subunit protein uL13 of Rickettsia akari (strain Hartford).